We begin with the raw amino-acid sequence, 640 residues long: Probable potassium transport system protein Kup 1 (640 aa).

Helical transmembrane passes span 25-45, 65-85, 115-135, 153-173, 181-201, 227-247, 263-283, 305-325, 353-373, 381-401, 410-430, and 438-458; these read LVLAALGVVYGDLGTSPLYAL, VVSLFLWSLILMVSVKYVMVL, AVGWVLLGLAGAAMLYGDGVI, PALAAYVVPATVVILAMLFMI, VGAAFGPILAAWFVAIAALGL, GFAGFVSLGAVVLCLTGAEAL, WYGLALPALILSYLGQGALLL, MVALSTLATIVASQALITAVF, IYLPLLNWTLMLATIAVVLGF, AAFGLAVSTTMAITTVLFAVL, WWAVALVAGSLFAIDLAFWLA, and GGWLPLLLGLAVFCVMGCWFG.

Belongs to the HAK/KUP transporter (TC 2.A.72) family.

It localises to the cell inner membrane. The catalysed reaction is K(+)(in) + H(+)(in) = K(+)(out) + H(+)(out). Functionally, transport of potassium into the cell. Likely operates as a K(+):H(+) symporter. This is Probable potassium transport system protein Kup 1 from Chromobacterium violaceum (strain ATCC 12472 / DSM 30191 / JCM 1249 / CCUG 213 / NBRC 12614 / NCIMB 9131 / NCTC 9757 / MK).